The sequence spans 229 residues: Cytochrome c oxidase subunit 2 (229 aa).

At 1–14 (MANHLQFNFQDATS) the chain is on the mitochondrial intermembrane side. A helical membrane pass occupies residues 15 to 45 (PLMQELVKFHDHSLTILFFISALILYVLMMT). At 46 to 59 (SLSKLTNKNILDSQ) the chain is on the mitochondrial matrix side. Residues 60-87 (EIEMVWTVIPAFILIMLALPSIQILYLM) traverse the membrane as a helical segment. The Mitochondrial intermembrane segment spans residues 88–229 (DEIASPDITI…FESWIIKLSL (142 aa)). His-162, Cys-197, Glu-199, Cys-201, His-205, and Met-208 together coordinate Cu cation. Residue Glu-199 coordinates Mg(2+).

Belongs to the cytochrome c oxidase subunit 2 family. Component of the cytochrome c oxidase (complex IV, CIV), a multisubunit enzyme composed of 14 subunits. The complex is composed of a catalytic core of 3 subunits MT-CO1, MT-CO2 and MT-CO3, encoded in the mitochondrial DNA, and 11 supernumerary subunits COX4I, COX5A, COX5B, COX6A, COX6B, COX6C, COX7A, COX7B, COX7C, COX8 and NDUFA4, which are encoded in the nuclear genome. The complex exists as a monomer or a dimer and forms supercomplexes (SCs) in the inner mitochondrial membrane with NADH-ubiquinone oxidoreductase (complex I, CI) and ubiquinol-cytochrome c oxidoreductase (cytochrome b-c1 complex, complex III, CIII), resulting in different assemblies (supercomplex SCI(1)III(2)IV(1) and megacomplex MCI(2)III(2)IV(2)). Found in a complex with TMEM177, COA6, COX18, COX20, SCO1 and SCO2. Interacts with TMEM177 in a COX20-dependent manner. Interacts with COX20. Interacts with COX16. The cofactor is Cu cation.

It is found in the mitochondrion inner membrane. The enzyme catalyses 4 Fe(II)-[cytochrome c] + O2 + 8 H(+)(in) = 4 Fe(III)-[cytochrome c] + 2 H2O + 4 H(+)(out). Its function is as follows. Component of the cytochrome c oxidase, the last enzyme in the mitochondrial electron transport chain which drives oxidative phosphorylation. The respiratory chain contains 3 multisubunit complexes succinate dehydrogenase (complex II, CII), ubiquinol-cytochrome c oxidoreductase (cytochrome b-c1 complex, complex III, CIII) and cytochrome c oxidase (complex IV, CIV), that cooperate to transfer electrons derived from NADH and succinate to molecular oxygen, creating an electrochemical gradient over the inner membrane that drives transmembrane transport and the ATP synthase. Cytochrome c oxidase is the component of the respiratory chain that catalyzes the reduction of oxygen to water. Electrons originating from reduced cytochrome c in the intermembrane space (IMS) are transferred via the dinuclear copper A center (CU(A)) of subunit 2 and heme A of subunit 1 to the active site in subunit 1, a binuclear center (BNC) formed by heme A3 and copper B (CU(B)). The BNC reduces molecular oxygen to 2 water molecules using 4 electrons from cytochrome c in the IMS and 4 protons from the mitochondrial matrix. This is Cytochrome c oxidase subunit 2 (MT-CO2) from Myxine glutinosa (Atlantic hagfish).